A 328-amino-acid polypeptide reads, in one-letter code: Probable tRNA pseudouridine synthase B (328 aa).

Catalysis depends on D71, which acts as the Nucleophile. The PUA domain maps to 238–313 (LPKIWVRDSA…LVARVDRVIM (76 aa)).

It belongs to the pseudouridine synthase TruB family. Type 2 subfamily.

It carries out the reaction uridine(55) in tRNA = pseudouridine(55) in tRNA. In terms of biological role, could be responsible for synthesis of pseudouridine from uracil-55 in the psi GC loop of transfer RNAs. This Pyrobaculum islandicum (strain DSM 4184 / JCM 9189 / GEO3) protein is Probable tRNA pseudouridine synthase B.